Consider the following 213-residue polypeptide: Thiopurine S-methyltransferase (213 aa).

Residues tryptophan 10, leucine 45, glutamate 66, and arginine 121 each coordinate S-adenosyl-L-methionine.

It belongs to the class I-like SAM-binding methyltransferase superfamily. TPMT family.

The protein localises to the cytoplasm. It carries out the reaction S-adenosyl-L-methionine + a thiopurine = S-adenosyl-L-homocysteine + a thiopurine S-methylether.. The protein is Thiopurine S-methyltransferase of Aliivibrio fischeri (strain MJ11) (Vibrio fischeri).